We begin with the raw amino-acid sequence, 154 residues long: Gene 35 protein (154 aa).

The segment at 116 to 137 (LTAAQDDPVEGGPEPADVADTI) is disordered.

The protein belongs to the herpesviridae UL96 family.

The polypeptide is Gene 35 protein (35) (Equus caballus (Horse)).